A 36-amino-acid chain; its full sequence is uncharacterized protein (36 aa).

This is an uncharacterized protein from Escherichia coli (strain K12).